Here is a 110-residue protein sequence, read N- to C-terminus: UPF0122 protein BCA_3946 (110 aa).

The protein belongs to the UPF0122 family.

Functionally, might take part in the signal recognition particle (SRP) pathway. This is inferred from the conservation of its genetic proximity to ftsY/ffh. May be a regulatory protein. In Bacillus cereus (strain 03BB102), this protein is UPF0122 protein BCA_3946.